Reading from the N-terminus, the 262-residue chain is Indole-3-glycerol phosphate synthase (262 aa).

Belongs to the TrpC family.

The catalysed reaction is 1-(2-carboxyphenylamino)-1-deoxy-D-ribulose 5-phosphate + H(+) = (1S,2R)-1-C-(indol-3-yl)glycerol 3-phosphate + CO2 + H2O. It participates in amino-acid biosynthesis; L-tryptophan biosynthesis; L-tryptophan from chorismate: step 4/5. This is Indole-3-glycerol phosphate synthase from Staphylococcus epidermidis (strain ATCC 35984 / DSM 28319 / BCRC 17069 / CCUG 31568 / BM 3577 / RP62A).